Here is a 312-residue protein sequence, read N- to C-terminus: Malate dehydrogenase (312 aa).

NAD(+) is bound by residues 12 to 17 (GAGFTG) and Asp36. Residues Arg87 and Arg93 each contribute to the substrate site. NAD(+) is bound by residues Asn100 and 123–125 (LTN). A substrate-binding site is contributed by Asn125. Ser149 carries the phosphoserine modification. Arg156 contacts substrate. The Proton acceptor role is filled by His180.

It belongs to the LDH/MDH superfamily. MDH type 3 family.

The enzyme catalyses (S)-malate + NAD(+) = oxaloacetate + NADH + H(+). Catalyzes the reversible oxidation of malate to oxaloacetate. This is Malate dehydrogenase from Bacillus cereus (strain ATCC 14579 / DSM 31 / CCUG 7414 / JCM 2152 / NBRC 15305 / NCIMB 9373 / NCTC 2599 / NRRL B-3711).